A 196-amino-acid polypeptide reads, in one-letter code: Imidazole glycerol phosphate synthase subunit HisH (196 aa).

The 195-residue stretch at 2 to 196 folds into the Glutamine amidotransferase type-1 domain; the sequence is KVAVIKYNAG…ERIIKNFLEL (195 aa). The Nucleophile role is filled by cysteine 77. Catalysis depends on residues histidine 178 and glutamate 180.

Heterodimer of HisH and HisF.

The protein resides in the cytoplasm. It carries out the reaction 5-[(5-phospho-1-deoxy-D-ribulos-1-ylimino)methylamino]-1-(5-phospho-beta-D-ribosyl)imidazole-4-carboxamide + L-glutamine = D-erythro-1-(imidazol-4-yl)glycerol 3-phosphate + 5-amino-1-(5-phospho-beta-D-ribosyl)imidazole-4-carboxamide + L-glutamate + H(+). The catalysed reaction is L-glutamine + H2O = L-glutamate + NH4(+). It functions in the pathway amino-acid biosynthesis; L-histidine biosynthesis; L-histidine from 5-phospho-alpha-D-ribose 1-diphosphate: step 5/9. Functionally, IGPS catalyzes the conversion of PRFAR and glutamine to IGP, AICAR and glutamate. The HisH subunit catalyzes the hydrolysis of glutamine to glutamate and ammonia as part of the synthesis of IGP and AICAR. The resulting ammonia molecule is channeled to the active site of HisF. This chain is Imidazole glycerol phosphate synthase subunit HisH, found in Bacteroides fragilis (strain YCH46).